Reading from the N-terminus, the 274-residue chain is Large ribosomal subunit protein uL2 (274 aa).

The segment at 225 to 274 is disordered; the sequence is MNPVDHPHGGGEGRSPIGRHPVTPWGKPTLGVKTRKKNKASSKLIIKRRK. Residues 257-274 are compositionally biased toward basic residues; that stretch reads KTRKKNKASSKLIIKRRK.

This sequence belongs to the universal ribosomal protein uL2 family. As to quaternary structure, part of the 50S ribosomal subunit. Forms a bridge to the 30S subunit in the 70S ribosome.

Functionally, one of the primary rRNA binding proteins. Required for association of the 30S and 50S subunits to form the 70S ribosome, for tRNA binding and peptide bond formation. It has been suggested to have peptidyltransferase activity; this is somewhat controversial. Makes several contacts with the 16S rRNA in the 70S ribosome. The polypeptide is Large ribosomal subunit protein uL2 (Carboxydothermus hydrogenoformans (strain ATCC BAA-161 / DSM 6008 / Z-2901)).